The sequence spans 302 residues: Urease accessory protein UreG (302 aa).

Basic and acidic residues-rich tracts occupy residues 1-32 (MHDP…DHVH), 40-56 (HEHE…EHGH), and 64-76 (HAHE…THEH). The disordered stretch occupies residues 1-76 (MHDPGEHGHG…EHAHGHTHEH (76 aa)). Residue 105–112 (GPVGSGKT) coordinates GTP.

This sequence belongs to the SIMIBI class G3E GTPase family. UreG subfamily. As to quaternary structure, homodimer. UreD, UreF and UreG form a complex that acts as a GTP-hydrolysis-dependent molecular chaperone, activating the urease apoprotein by helping to assemble the nickel containing metallocenter of UreC. The UreE protein probably delivers the nickel.

The protein localises to the cytoplasm. Facilitates the functional incorporation of the urease nickel metallocenter. This process requires GTP hydrolysis, probably effectuated by UreG. The chain is Urease accessory protein UreG from Sorangium cellulosum (strain So ce56) (Polyangium cellulosum (strain So ce56)).